Consider the following 44-residue polypeptide: Large ribosomal subunit protein bL34 (44 aa).

Composition is skewed to basic residues over residues 1–14 (MKRT…KRQK) and 31–44 (LSAR…RLAV). A disordered region spans residues 1–44 (MKRTLGGTTRKRQKTSGFRARMRTASGRRVLSARRRRGRHRLAV).

Belongs to the bacterial ribosomal protein bL34 family.

This chain is Large ribosomal subunit protein bL34, found in Gloeobacter violaceus (strain ATCC 29082 / PCC 7421).